The chain runs to 358 residues: Beta-lactamase (358 aa).

Residue Ser-60 is the Acyl-ester intermediate of the active site. The active-site Proton acceptor is the Tyr-146. A substrate-binding site is contributed by 311 to 313 (KTG).

This sequence belongs to the class-C beta-lactamase family.

The protein localises to the periplasm. It catalyses the reaction a beta-lactam + H2O = a substituted beta-amino acid. Its function is as follows. This protein is a serine beta-lactamase with a substrate specificity for cephalosporins. This Pseudomonas fluorescens protein is Beta-lactamase.